The sequence spans 388 residues: Probable protein phosphatase 2C 43 (388 aa).

A PPM-type phosphatase domain is found at Glu-53–Ile-352. Mn(2+) is bound by residues Asp-84, Gly-85, Asp-284, and Asp-343.

It belongs to the PP2C family. Mg(2+) serves as cofactor. It depends on Mn(2+) as a cofactor.

The catalysed reaction is O-phospho-L-seryl-[protein] + H2O = L-seryl-[protein] + phosphate. It catalyses the reaction O-phospho-L-threonyl-[protein] + H2O = L-threonyl-[protein] + phosphate. In Oryza sativa subsp. japonica (Rice), this protein is Probable protein phosphatase 2C 43.